The primary structure comprises 281 residues: Merozoite surface protein 1 (281 aa).

The N-terminal stretch at 1-19 (MKIIFFLCSFLFFIINTQC) is a signal peptide. A compositionally biased stretch (low complexity) spans 63-100 (ASAQSGASAQSGASAQSGASAQSGTSGPSGPSGTSPSS). The tract at residues 63-126 (ASAQSGASAQ…PADASDSDAK (64 aa)) is disordered. Residues 101–110 (RSNTLPRSNT) show a composition bias toward polar residues. N-linked (GlcNAc...) asparagine glycosylation is present at Asn-109. Over residues 111 to 120 (SSGASPPADA) the composition is skewed to low complexity. A glycan (N-linked (GlcNAc...) asparagine) is linked at Asn-248.

Forms a complex composed of subunits p83, p30, p38, and p42 which remain non-covalently associated; the complex is formed at the merozoite surface prior to egress from host erythrocytes. Forms a complex composed of processed MSP1 subunits, MSP6 subunit p36 and MSP7; the complex is formed at the merozoite surface prior to egress from host erythrocytes. Within the complex, interacts (via subunit p38) with MSP6 subunit p36 and (via subunits p83, p30 and p38) with MSP7 (via subunit p22). Forms a complex composed of MSP1, MSP6, DBLMSP1 and DBLMSP2. Within the complex, interacts (via subunit p38) with DBLMSP1 and DBLMSP2. Forms a complex composed of MSP1, and rhoptry proteins RhopH3, RAP1 and CLAG9/RhopH3. Within the complex, interacts (via subunits p42 and p19) with RhopH3 (via C-terminus). Forms a complex composed of MSP1, MSP6, MSP7, MSP9 and MSP3; within the complex, MSP6 and MSP9 mediate the binding to the host erythrocyte. Interacts (via subunits p19 and p42) with MSP9; the interaction is direct; MSP1 subunits p19 or p42, and MSP9 form a co-ligand complex that interacts with host SLC4A1/Band 3 protein. May interact with PFD6. Interacts with host spectrin. Post-translationally, the p190 precursor is cleaved by SUB1 prior to merozoite egress into 4 subunits p83, p30, p38, and p42 which remain non-covalently associated. SUB1-mediated proteolytic cleavage occurs in an orderly manner; the first cleavage occurs at the p30/p38 site, followed by cleavage at the p83/p30 site, the last cleavage occurs at the p38/p42 site. The order of cleavage is essential for parasite viability. SUB1-mediated processing is essential for merozoite egress. In a second processing step during erythrocyte invasion, p42 is cleaved by SUB2 into p33 and p19; the latter remains attached to the merozoite surface via its GPI-anchor and is endocytosed during the subsequent ring stage.

The protein localises to the cell membrane. Its subcellular location is the secreted. Functionally, during the asexual blood stage, involved in merozoite egress from host erythrocytes possibly via its interaction with the host cytoskeleton protein spectrin resulting in the destabilization of the host cytoskeleton and thus leading to erythrocyte cell membrane rupture. Involved in the binding to host erythrocytes and is required for host erythrocyte invasion. The polypeptide is Merozoite surface protein 1 (Plasmodium falciparum (isolate NF7 / Ghana)).